Here is an 808-residue protein sequence, read N- to C-terminus: Leucine-rich repeat-containing protein 41 (808 aa).

The segment at 45–54 (ALFELCGRAV) is interaction with Elongin BC complex. Phosphoserine occurs at positions 155, 276, and 326. Disordered regions lie at residues 269 to 289 (ASRG…SRRP) and 304 to 404 (TRRK…GSGA). Position 327 is a phosphothreonine (Thr327). Residues 357–379 (PSSAPTAASSSTSSKRAPASSVS) are compositionally biased toward low complexity. At Ser369 the chain carries Phosphoserine. The segment covering 383–397 (PLKRFKRATGKKGPR) has biased composition (basic residues). LRR repeat units lie at residues 483–503 (WVSL…IFRL), 514–526 (AGCR…LSDL), 527–551 (FSPL…VLSI), 609–631 (SGSL…FGLV), 632–655 (LQTL…LADC), 697–724 (NSTL…VFSE), and 727–748 (SSSL…LLEF).

Part of an E3 ubiquitin-protein ligase complex with Elongin BC (ELOB and ELOC), RBX1 and CUL5. Component of a probable ECS(LRRC41) complex which contains CUL5, RNF7/RBX2, Elongin BC and LRRC41. Interacts with CUL5, RNF7, ELOB and ELOC.

It functions in the pathway protein modification; protein ubiquitination. In terms of biological role, probable substrate recognition component of an ECS (Elongin BC-CUL2/5-SOCS-box protein) E3 ubiquitin ligase complex which mediates the ubiquitination and subsequent proteasomal degradation of target proteins. This Rattus norvegicus (Rat) protein is Leucine-rich repeat-containing protein 41 (Lrrc41).